The chain runs to 249 residues: Low affinity immunoglobulin gamma Fc region receptor III-A (249 aa).

An N-terminal signal peptide occupies residues 1 to 16; the sequence is MWQLLPSTALLLVASA. Topologically, residues 17–198 are extracellular; it reads RPQAADLPKA…IQGPPVPSTS (182 aa). Ig-like C2-type domains are found at residues 24–104 and 119–172; these read PKAV…LEVH and EGEP…YFCR. Cystine bridges form between Cys47-Cys88 and Cys127-Cys171. N-linked (GlcNAc...) asparagine glycosylation is found at Asn55, Asn63, Asn166, and Asn179. The helical transmembrane segment at 199 to 219 threads the bilayer; sequence ALLPFWPHIPFAVVMALLFAV. Residues 220 to 249 are Cytoplasmic-facing; that stretch reads DTGLYFAMQRHLHNSKRAWENSKVSWKQDP.

In terms of assembly, forms a heterooligomeric complex with ITAM-containing signaling subunits FCER1G. Interacts (via transmembrane domain) with signaling subunits; this interaction is a prerequisite for receptor complex expression on the cell surface and intracellular signal transduction. Binds the Fc region of antigen-complexed IgG.

It is found in the cell membrane. Receptor for the invariable Fc fragment of immunoglobulin gamma (IgG). Optimally activated upon binding of clustered antigen-IgG complexes displayed on cell surfaces, triggers lysis of antibody-coated cells, a process known as antibody-dependent cellular cytotoxicity (ADCC). Does not bind free monomeric IgG, thus avoiding inappropriate effector cell activation in the absence of antigenic trigger. Mediates IgG effector functions on natural killer (NK) cells. Binds antigen-IgG complexes generated upon infection and triggers NK cell-dependent cytokine production and degranulation to limit viral load and propagation. Fc-binding subunit that associates with FCER1G adapter to form functional signaling complexes. Following the engagement of antigen-IgG complexes, triggers phosphorylation of immunoreceptor tyrosine-based activation motif (ITAM)-containing adapter with subsequent activation of phosphatidylinositol 3-kinase signaling and sustained elevation of intracellular calcium that ultimately drive NK cell activation. Mediates enhanced ADCC in response to afucosylated IgGs. In Mustela putorius furo (European domestic ferret), this protein is Low affinity immunoglobulin gamma Fc region receptor III-A.